Reading from the N-terminus, the 343-residue chain is Oxygen-dependent coproporphyrinogen-III oxidase (343 aa).

Ser-99 serves as a coordination point for substrate. His-103 and His-113 together coordinate a divalent metal cation. The active-site Proton donor is His-113. 115-117 (NYR) provides a ligand contact to substrate. Positions 147 and 177 each coordinate a divalent metal cation. The interval 267 to 302 (YVEFNLVWDRGTIFGLQTNGRTESILMSLPPLARWE) is important for dimerization.

It belongs to the aerobic coproporphyrinogen-III oxidase family. As to quaternary structure, homodimer. Requires a divalent metal cation as cofactor.

It is found in the cytoplasm. It catalyses the reaction coproporphyrinogen III + O2 + 2 H(+) = protoporphyrinogen IX + 2 CO2 + 2 H2O. It participates in porphyrin-containing compound metabolism; protoporphyrin-IX biosynthesis; protoporphyrinogen-IX from coproporphyrinogen-III (O2 route): step 1/1. Its function is as follows. Involved in the heme and chlorophyll biosynthesis. Catalyzes the aerobic oxidative decarboxylation of propionate groups of rings A and B of coproporphyrinogen-III to yield the vinyl groups in protoporphyrinogen-IX. The sequence is that of Oxygen-dependent coproporphyrinogen-III oxidase from Prochlorococcus marinus (strain SARG / CCMP1375 / SS120).